The primary structure comprises 119 residues: Large ribosomal subunit protein bL20 (119 aa).

This sequence belongs to the bacterial ribosomal protein bL20 family.

In terms of biological role, binds directly to 23S ribosomal RNA and is necessary for the in vitro assembly process of the 50S ribosomal subunit. It is not involved in the protein synthesizing functions of that subunit. The protein is Large ribosomal subunit protein bL20 of Xylella fastidiosa (strain 9a5c).